The chain runs to 553 residues: Arylsulfatase K (553 aa).

The N-terminal stretch at 1 to 16 (MLLLLVSVVAALALAA) is a signal peptide. Ca(2+)-binding residues include D40 and C80. Residue C80 is the Nucleophile of the active site. Residue C80 is modified to 3-oxoalanine (Cys). An N-linked (GlcNAc...) asparagine glycan is attached at N108. Residue K128 coordinates substrate. N191 carries N-linked (GlcNAc...) asparagine glycosylation. H249 provides a ligand contact to substrate. N260 is a glycosylation site (N-linked (GlcNAc...) asparagine). D311 and H312 together coordinate Ca(2+). 3 N-linked (GlcNAc...) asparagine glycosylation sites follow: N373, N411, and N496. The disordered stretch occupies residues 530–553 (SPLASSPTQSTSGSQPTLPQSTSG). Low complexity predominate over residues 534–553 (SSPTQSTSGSQPTLPQSTSG).

This sequence belongs to the sulfatase family. Ca(2+) serves as cofactor. Post-translationally, the conversion to 3-oxoalanine (also known as C-formylglycine, FGly), of a serine or cysteine residue in prokaryotes and of a cysteine residue in eukaryotes, is critical for catalytic activity. In terms of processing, the 75-kDa precursor undergoes proteolytic processing to yield a 23 kDa form. N-glycosylated with both high mannose and complex type sugars.

Its subcellular location is the secreted. The protein resides in the lysosome. It carries out the reaction an aryl sulfate + H2O = a phenol + sulfate + H(+). The catalysed reaction is Hydrolysis of the 2-sulfate groups of the 2-O-sulfo-D-glucuronate residues of chondroitin sulfate, heparin and heparitin sulfate.. Its function is as follows. Catalyzes the hydrolysis of pseudosubstrates such as p-nitrocatechol sulfate and p-nitrophenyl sulfate. Catalyzes the hydrolysis of the 2-sulfate groups of the 2-O-sulfo-D-glucuronate residues of chondroitin sulfate, heparin and heparitin sulfate. Acts selectively on 2-sulfoglucuronate and lacks activity against 2-sulfoiduronate. The chain is Arylsulfatase K (Arsk) from Mus musculus (Mouse).